Consider the following 137-residue polypeptide: Large ribosomal subunit protein uL16 (137 aa).

This sequence belongs to the universal ribosomal protein uL16 family. As to quaternary structure, part of the 50S ribosomal subunit.

Functionally, binds 23S rRNA and is also seen to make contacts with the A and possibly P site tRNAs. The chain is Large ribosomal subunit protein uL16 from Nitrobacter winogradskyi (strain ATCC 25391 / DSM 10237 / CIP 104748 / NCIMB 11846 / Nb-255).